Here is a 339-residue protein sequence, read N- to C-terminus: D-erythrose-4-phosphate dehydrogenase (339 aa).

Arginine 11 to isoleucine 12 serves as a coordination point for NAD(+). Residues serine 158–threonine 160, arginine 204, threonine 217–lysine 218, and arginine 240 each bind substrate. The active-site Nucleophile is the cysteine 159. Asparagine 322 serves as a coordination point for NAD(+).

The protein belongs to the glyceraldehyde-3-phosphate dehydrogenase family. Epd subfamily. As to quaternary structure, homotetramer.

The protein resides in the cytoplasm. The enzyme catalyses D-erythrose 4-phosphate + NAD(+) + H2O = 4-phospho-D-erythronate + NADH + 2 H(+). Its pathway is cofactor biosynthesis; pyridoxine 5'-phosphate biosynthesis; pyridoxine 5'-phosphate from D-erythrose 4-phosphate: step 1/5. Its function is as follows. Catalyzes the NAD-dependent conversion of D-erythrose 4-phosphate to 4-phosphoerythronate. In Aliivibrio fischeri (strain ATCC 700601 / ES114) (Vibrio fischeri), this protein is D-erythrose-4-phosphate dehydrogenase.